A 286-amino-acid chain; its full sequence is MSLQDKLRAYARLMRIDRPIGTLLLLWPCLMALVLAAQGLPDIKVLLIFIVGVVIMRANGCIINDFADRKLDAHVERTSMRPLVSGEVSVKEALTLFTLLGLAAFCLVLWLNPLVVQLSVVGIILTVMYPFMKRVTNMPQMFLGIVWSWSIPMAYAAQLGEVPVEAWWLFMANWCWTVAYDTMYAIVDRDDDLKVGIKSTAILFGRFDRQIIGVFQLAALGCFVMAGLVADRGVIYGLGIISFIGFAVYQQRLIFGRERAPCFKAFLNNNWAGMVLFIALALDYMI.

8 helical membrane passes run 20-40 (IGTL…AQGL), 43-63 (IKVL…GCII), 96-116 (LFTL…PLVV), 142-162 (FLGI…LGEV), 167-187 (WWLF…YAIV), 210-230 (QIIG…GLVA), 235-255 (IYGL…RLIF), and 266-286 (FLNN…DYMI).

Belongs to the UbiA prenyltransferase family. Mg(2+) serves as cofactor.

It is found in the cell inner membrane. The enzyme catalyses all-trans-octaprenyl diphosphate + 4-hydroxybenzoate = 4-hydroxy-3-(all-trans-octaprenyl)benzoate + diphosphate. The protein operates within cofactor biosynthesis; ubiquinone biosynthesis. In terms of biological role, catalyzes the prenylation of para-hydroxybenzoate (PHB) with an all-trans polyprenyl group. Mediates the second step in the final reaction sequence of ubiquinone-8 (UQ-8) biosynthesis, which is the condensation of the polyisoprenoid side chain with PHB, generating the first membrane-bound Q intermediate 3-octaprenyl-4-hydroxybenzoate. This is 4-hydroxybenzoate octaprenyltransferase from Shewanella frigidimarina (strain NCIMB 400).